The primary structure comprises 208 residues: Large ribosomal subunit protein bL25 (208 aa).

Low complexity predominate over residues 186 to 201 (PAGEKSAAAEEGAAAA). The tract at residues 186–208 (PAGEKSAAAEEGAAAAGEDKPAA) is disordered.

It belongs to the bacterial ribosomal protein bL25 family. CTC subfamily. Part of the 50S ribosomal subunit; part of the 5S rRNA/L5/L18/L25 subcomplex. Contacts the 5S rRNA. Binds to the 5S rRNA independently of L5 and L18.

Functionally, this is one of the proteins that binds to the 5S RNA in the ribosome where it forms part of the central protuberance. The polypeptide is Large ribosomal subunit protein bL25 (Ralstonia pickettii (strain 12J)).